The chain runs to 117 residues: DNA-directed RNA polymerase subunit omega (117 aa).

Residues 96–105 (KEEAEEEAKQ) are compositionally biased toward basic and acidic residues. The interval 96–117 (KEEAEEEAKQKNSRAAKAAAAE) is disordered. Low complexity predominate over residues 108–117 (SRAAKAAAAE).

Belongs to the RNA polymerase subunit omega family. The RNAP catalytic core consists of 2 alpha, 1 beta, 1 beta' and 1 omega subunit. When a sigma factor is associated with the core the holoenzyme is formed, which can initiate transcription.

It carries out the reaction RNA(n) + a ribonucleoside 5'-triphosphate = RNA(n+1) + diphosphate. Functionally, promotes RNA polymerase assembly. Latches the N- and C-terminal regions of the beta' subunit thereby facilitating its interaction with the beta and alpha subunits. This chain is DNA-directed RNA polymerase subunit omega, found in Lactococcus lactis subsp. cremoris (strain MG1363).